The chain runs to 341 residues: S-adenosylmethionine:tRNA ribosyltransferase-isomerase (341 aa).

The protein belongs to the QueA family. As to quaternary structure, monomer.

It localises to the cytoplasm. It carries out the reaction 7-aminomethyl-7-carbaguanosine(34) in tRNA + S-adenosyl-L-methionine = epoxyqueuosine(34) in tRNA + adenine + L-methionine + 2 H(+). It participates in tRNA modification; tRNA-queuosine biosynthesis. In terms of biological role, transfers and isomerizes the ribose moiety from AdoMet to the 7-aminomethyl group of 7-deazaguanine (preQ1-tRNA) to give epoxyqueuosine (oQ-tRNA). The polypeptide is S-adenosylmethionine:tRNA ribosyltransferase-isomerase (Trichlorobacter lovleyi (strain ATCC BAA-1151 / DSM 17278 / SZ) (Geobacter lovleyi)).